The sequence spans 386 residues: Protein-glutamate methylesterase/protein-glutamine glutaminase (386 aa).

The region spanning 4–121 (KVLVVDDSAF…ARNRDEAVKT (118 aa)) is the Response regulatory domain. Asp55 carries the 4-aspartylphosphate modification. Residues 133–161 (PVSRTSARASTPPPVAKQPERSSEPTTAL) form a disordered region. Positions 190–384 (INRAYQLLAI…KAIMKEVGYS (195 aa)) constitute a CheB-type methylesterase domain. Active-site residues include Ser202, His229, and Asp326.

This sequence belongs to the CheB family. Phosphorylated by CheA. Phosphorylation of the N-terminal regulatory domain activates the methylesterase activity.

Its subcellular location is the cytoplasm. The catalysed reaction is [protein]-L-glutamate 5-O-methyl ester + H2O = L-glutamyl-[protein] + methanol + H(+). The enzyme catalyses L-glutaminyl-[protein] + H2O = L-glutamyl-[protein] + NH4(+). Its function is as follows. Involved in chemotaxis. Part of a chemotaxis signal transduction system that modulates chemotaxis in response to various stimuli. Catalyzes the demethylation of specific methylglutamate residues introduced into the chemoreceptors (methyl-accepting chemotaxis proteins or MCP) by CheR. Also mediates the irreversible deamidation of specific glutamine residues to glutamic acid. This is Protein-glutamate methylesterase/protein-glutamine glutaminase from Idiomarina loihiensis (strain ATCC BAA-735 / DSM 15497 / L2-TR).